A 68-amino-acid chain; its full sequence is Conotoxin TsMMSK-021 (68 aa).

Residues Met-1–Ala-20 form the signal peptide. A propeptide spanning residues Val-21–Val-50 is cleaved from the precursor. Intrachain disulfides connect Cys-53–Cys-66, Cys-54–Cys-62, and Cys-58–Cys-65. 4-hydroxyproline is present on Pro-64.

The protein belongs to the conotoxin M superfamily. In terms of tissue distribution, expressed by the venom duct.

Its subcellular location is the secreted. The polypeptide is Conotoxin TsMMSK-021 (Conus tessulatus (Tessellate cone)).